The primary structure comprises 572 residues: Proline--tRNA ligase (572 aa).

It belongs to the class-II aminoacyl-tRNA synthetase family. ProS type 1 subfamily. As to quaternary structure, homodimer.

The protein localises to the cytoplasm. The catalysed reaction is tRNA(Pro) + L-proline + ATP = L-prolyl-tRNA(Pro) + AMP + diphosphate. In terms of biological role, catalyzes the attachment of proline to tRNA(Pro) in a two-step reaction: proline is first activated by ATP to form Pro-AMP and then transferred to the acceptor end of tRNA(Pro). As ProRS can inadvertently accommodate and process non-cognate amino acids such as alanine and cysteine, to avoid such errors it has two additional distinct editing activities against alanine. One activity is designated as 'pretransfer' editing and involves the tRNA(Pro)-independent hydrolysis of activated Ala-AMP. The other activity is designated 'posttransfer' editing and involves deacylation of mischarged Ala-tRNA(Pro). The misacylated Cys-tRNA(Pro) is not edited by ProRS. The polypeptide is Proline--tRNA ligase (Leuconostoc mesenteroides subsp. mesenteroides (strain ATCC 8293 / DSM 20343 / BCRC 11652 / CCM 1803 / JCM 6124 / NCDO 523 / NBRC 100496 / NCIMB 8023 / NCTC 12954 / NRRL B-1118 / 37Y)).